The primary structure comprises 241 residues: 3-dehydroquinate dehydratase (241 aa).

Residues 35–37 and arginine 70 contribute to the 3-dehydroquinate site; that span reads ELR. Histidine 132 serves as the catalytic Proton donor/acceptor. The active-site Schiff-base intermediate with substrate is lysine 159. 3-dehydroquinate is bound by residues arginine 201 and glutamine 224.

The protein belongs to the type-I 3-dehydroquinase family. In terms of assembly, homodimer.

It carries out the reaction 3-dehydroquinate = 3-dehydroshikimate + H2O. Its pathway is metabolic intermediate biosynthesis; chorismate biosynthesis; chorismate from D-erythrose 4-phosphate and phosphoenolpyruvate: step 3/7. In terms of biological role, involved in the third step of the chorismate pathway, which leads to the biosynthesis of aromatic amino acids. Catalyzes the cis-dehydration of 3-dehydroquinate (DHQ) and introduces the first double bond of the aromatic ring to yield 3-dehydroshikimate. This chain is 3-dehydroquinate dehydratase, found in Staphylococcus carnosus (strain TM300).